Here is a 298-residue protein sequence, read N- to C-terminus: KH domain-containing protein At1g09660/At1g09670 (298 aa).

Positions 152 to 219 constitute a KH domain; sequence DVPVDKYPSY…EHLCEPLHVL (68 aa). A disordered region spans residues 266–298; the sequence is NGTLREESPSPSLSPCLSPSMSPFNSKRAKTEI. Phosphoserine occurs at positions 273 and 287. Residues 274-288 show a composition bias toward low complexity; the sequence is PSPSLSPCLSPSMSP.

The protein localises to the nucleus. The protein is KH domain-containing protein At1g09660/At1g09670 of Arabidopsis thaliana (Mouse-ear cress).